Consider the following 386-residue polypeptide: S-adenosylmethionine synthase (386 aa).

ATP is bound at residue H16. D18 contributes to the Mg(2+) binding site. E44 contacts K(+). L-methionine contacts are provided by E57 and Q100. Residues Q100–R110 form a flexible loop region. Residues D165 to K167, D240, R246 to K247, A263, and K267 each bind ATP. D240 is a binding site for L-methionine. K271 provides a ligand contact to L-methionine.

The protein belongs to the AdoMet synthase family. Homotetramer; dimer of dimers. Mg(2+) is required as a cofactor. It depends on K(+) as a cofactor.

The protein resides in the cytoplasm. The catalysed reaction is L-methionine + ATP + H2O = S-adenosyl-L-methionine + phosphate + diphosphate. Its pathway is amino-acid biosynthesis; S-adenosyl-L-methionine biosynthesis; S-adenosyl-L-methionine from L-methionine: step 1/1. Catalyzes the formation of S-adenosylmethionine (AdoMet) from methionine and ATP. The overall synthetic reaction is composed of two sequential steps, AdoMet formation and the subsequent tripolyphosphate hydrolysis which occurs prior to release of AdoMet from the enzyme. In Francisella tularensis subsp. tularensis (strain FSC 198), this protein is S-adenosylmethionine synthase.